A 193-amino-acid polypeptide reads, in one-letter code: Interleukin-18-binding protein (193 aa).

An N-terminal signal peptide occupies residues 1-28 (MTMRHCWTAGPSSWWVLLLYVHVILARA). The 102-residue stretch at 60 to 161 (PALDVIWPEK…QVAQYHIILA (102 aa)) folds into the Ig-like C2-type domain. Residues N74, N98, N120, and N142 are each glycosylated (N-linked (GlcNAc...) asparagine). Cysteines 81 and 145 form a disulfide. The span at 172–185 (SPSQETLSSHSPVS) shows a compositional bias: polar residues. Residues 172–193 (SPSQETLSSHSPVSRSAGPGVA) are disordered.

The protein resides in the secreted. Binds to IL-18 and inhibits its activity. Functions as an inhibitor of the early TH1 cytokine response. This Mus musculus (Mouse) protein is Interleukin-18-binding protein (Il18bp).